The following is a 146-amino-acid chain: VHLTDAEKAAISGLWGKVBABAAGAZALGRLLVVYPWTZRFFZHFGBLSSASAVMGNAQVKAHGKKVIHAFADGLKHLDBLKGTFASLSZLHCBKLHVBPZBFRLLGBMIVIVLAHHLGKDFTPSAZAAFZKVVAGVASALAHKYH.

Val1 bears the N-acetylvaline mark. In terms of domain architecture, Globin spans 2 to 146 (HLTDAEKAAI…VASALAHKYH (145 aa)). His63 is a heme b binding site. An N6-acetyllysine modification is found at Lys82. Residue His92 coordinates heme b. Residue Cys93 is modified to S-nitrosocysteine. At Lys144 the chain carries N6-acetyllysine.

This sequence belongs to the globin family. In terms of assembly, heterotetramer of two alpha chains and two beta chains. In terms of tissue distribution, red blood cells.

Functionally, involved in oxygen transport from the lung to the various peripheral tissues. This Microtus xanthognathus (Yellow-cheeked vole) protein is Hemoglobin subunit beta (HBB).